The primary structure comprises 908 residues: Glutamate receptor ionotropic, kainate 2 (908 aa).

The signal sequence occupies residues 1–31; that stretch reads MKIISPVLSNLVFSRSIKVLLCLLWIGYSQG. The Extracellular segment spans residues 32-561; sequence TTHVLRFGGI…VFSFLNPLSP (530 aa). N-linked (GlcNAc...) asparagine glycans are attached at residues N67, N73, N275, N378, N412, N423, and N430. C96 and C347 are joined by a disulfide. Residues P516, A518, and R523 each coordinate L-glutamate. N546 carries N-linked (GlcNAc...) asparagine glycosylation. The helical transmembrane segment at 562–582 threads the bilayer; sequence DIWMYILLAYLGVSCVLFVIA. Topologically, residues 583–638 are cytoplasmic; sequence RFSPYEWYNPHPCNPDSDVVENNFTLLNSFWFGVGALMQQGSELMPKALSTRIVGG. Residues 639 to 659 form a helical membrane-spanning segment; that stretch reads IWWFFTLIIISSYTANLAAFL. Residues 660–819 are Extracellular-facing; that stretch reads TVERMESPID…KEASALGVQN (160 aa). A689, T690, and E738 together coordinate L-glutamate. A disulfide bond links C750 and C804. N-linked (GlcNAc...) asparagine glycosylation is present at N751. Residues 820 to 840 form a helical membrane-spanning segment; that stretch reads IGGIFIVLAAGLVLSVFVAVG. At 841–908 the chain is on the cytoplasmic side; sequence EFLYKSKKNA…RRLPGKETMA (68 aa). Phosphoserine; by PKC is present on residues S846 and S868. A Glycyl lysine isopeptide (Lys-Gly) (interchain with G-Cter in SUMO1) cross-link involves residue K886.

This sequence belongs to the glutamate-gated ion channel (TC 1.A.10.1) family. GRIK2 subfamily. In terms of assembly, homotetramer and heterotetramer with GRIK5. Tetramers may be formed by the dimerization of dimers. Assembles into a kainate-gated homomeric channel that does not bind AMPA. Can form functional heteromeric receptors with GRIK4 and GRIK5. Can form functional heteromeric receptors with GRIK3. Interacts with DLG4. Interacts with NETO2. Interacts (via C-terminus) with KLHL17 (via kelch repeats); the interaction targets GRIK2 for degradation via ubiquitin-proteasome pathway. Post-translationally, sumoylation mediates kainate receptor-mediated endocytosis and regulates synaptic transmission. Sumoylation is enhanced by PIAS3 and desumoylated by SENP1. In terms of processing, ubiquitinated. Ubiquitination regulates the GRIK2 levels at the synapse by leading kainate receptor degradation through proteasome. Phosphorylated by PKC at Ser-868 upon agonist activation, this directly enhance sumoylation. In terms of tissue distribution, highest expression is found in the olfactory lobe, piriform cortex, dentate gyrus, hippocampus, granular cell layer of the cerebellum, and in caudate-putamen.

It localises to the cell membrane. Its subcellular location is the postsynaptic cell membrane. It carries out the reaction Ca(2+)(in) = Ca(2+)(out). It catalyses the reaction Na(+)(in) = Na(+)(out). Its activity is regulated as follows. Cold receptor activity activated by temperatures between 10-19 degrees Celsius. In terms of biological role, ionotropic glutamate receptor that functions as a cation-permeable ligand-gated ion channel, gated by L-glutamate and the glutamatergic agonist kainic acid. L-glutamate acts as an excitatory neurotransmitter at many synapses in the central nervous system. Binding of the excitatory neurotransmitter L-glutamate induces a conformation change, leading to the opening of the cation channel, and thereby converts the chemical signal to an electrical impulse. The receptor then desensitizes rapidly and enters a transient inactive state, characterized by the presence of bound agonist. Modulates cell surface expression of NETO2. In association with GRIK3, involved in presynaptic facilitation of glutamate release at hippocampal mossy fiber synapses. Independent of its ionotropic glutamate receptor activity, acts as a thermoreceptor conferring sensitivity to cold temperatures. Functions in dorsal root ganglion neurons. The protein is Glutamate receptor ionotropic, kainate 2 (Grik2) of Rattus norvegicus (Rat).